Here is a 37-residue protein sequence, read N- to C-terminus: ALRAAAVAGSPQQLLPLGQRERKAGCKNFFWKTFSSC.

Residues 1–2 (AL) constitute a propeptide that is removed on maturation. The cysteines at positions 26 and 37 are disulfide-linked.

Belongs to the somatostatin family.

Its subcellular location is the secreted. Its function is as follows. Somatostatin inhibits the release of somatotropin. This Petromyzon marinus (Sea lamprey) protein is Somatostatin-37 (sst).